The following is a 166-amino-acid chain: KH homology domain-containing protein 1C (166 aa).

The KH; atypical domain occupies P19 to M78.

This sequence belongs to the KHDC1 family.

This chain is KH homology domain-containing protein 1C (Khdc1c), found in Mus musculus (Mouse).